Consider the following 615-residue polypeptide: Pentatricopeptide repeat-containing protein At2g25580 (615 aa).

Residues 40-98 (FGNSNDSSEMNPREGYNGRIQNRTGSSGEVSESIHTQSQSLGSNQGRNEQSWKQSPSLS) form a disordered region. Over residues 58 to 98 (RIQNRTGSSGEVSESIHTQSQSLGSNQGRNEQSWKQSPSLS) the composition is skewed to polar residues. 4 PPR repeats span residues 288–318 (DLSS…MSEK), 319–353 (NLET…GNIP), 354–389 (DGQL…GIAP), and 390–420 (SIED…MPME). The interval 490 to 520 (SSMQEFRAGDTNLPENDELFQLLRNLKMHMV) is type E(+) motif. Residues 521 to 615 (EVGYVAETRM…NGACTCKDYW (95 aa)) are type DYW motif.

This sequence belongs to the PPR family. PCMP-H subfamily.

This chain is Pentatricopeptide repeat-containing protein At2g25580 (PCMP-H75), found in Arabidopsis thaliana (Mouse-ear cress).